We begin with the raw amino-acid sequence, 317 residues long: Transcription initiation factor IIB 3 (317 aa).

The segment covering 1–14 (MERATREREKEQRE) has biased composition (basic and acidic residues). The disordered stretch occupies residues 1 to 25 (MERATREREKEQREQAQTNDEAQQC). The segment at 21 to 50 (EAQQCPECNSANVITDQSERVCEDCGLVLE) adopts a TFIIB-type zinc-finger fold. Zn(2+)-binding residues include cysteine 25, cysteine 28, cysteine 42, and cysteine 45. A disordered region spans residues 62-83 (AFNSSERDQKSRVGAPTTKTMH). Repeat copies occupy residues 136-219 (SEID…AQEL) and 230-311 (EYLP…EQIE).

It belongs to the TFIIB family.

Functionally, stabilizes TBP binding to an archaeal box-A promoter. Also responsible for recruiting RNA polymerase II to the pre-initiation complex (DNA-TBP-TFIIB). This chain is Transcription initiation factor IIB 3, found in Halobacterium salinarum (strain ATCC 700922 / JCM 11081 / NRC-1) (Halobacterium halobium).